The primary structure comprises 445 residues: NAD-specific glutamate dehydrogenase (445 aa).

Residue Lys-124 is part of the active site. 235–241 (GFGNVAW) lines the NAD(+) pocket.

It belongs to the Glu/Leu/Phe/Val dehydrogenases family. In terms of assembly, homohexamer.

It carries out the reaction L-glutamate + NAD(+) + H2O = 2-oxoglutarate + NH4(+) + NADH + H(+). This chain is NAD-specific glutamate dehydrogenase (gdhB), found in Bacteroides fragilis (strain YCH46).